Consider the following 123-residue polypeptide: Polyadenylate-binding protein-interacting protein 2B (123 aa).

At Met1 the chain carries N-acetylmethionine. Positions 1–13 are enriched in polar residues; it reads MNGSNMANTSPSV. Disordered regions lie at residues 1 to 30 and 91 to 123; these read MNGS…KENP and NGLS…GEKY. Basic and acidic residues-rich tracts occupy residues 14–30 and 113–123; these read KSKE…KENP and DAKEFIPGEKY.

It belongs to the PAIP2 family. As to quaternary structure, interacts (via central acidic portion and C-terminus) with PABPC1 (via the second and third RRM domains and the C-terminus). Ubiquitinated in vitro. As to expression, expressed in brain, cervix, heart, liver, ovary, kidney, prostate and testis.

In terms of biological role, inhibits translation of capped and polyadenylated mRNAs by displacing PABPC1 from the poly(A) tail. In Homo sapiens (Human), this protein is Polyadenylate-binding protein-interacting protein 2B (PAIP2B).